Here is a 403-residue protein sequence, read N- to C-terminus: Poly(rC)-binding protein 4 (403 aa).

KH domains follow at residues 17 to 67 (TLTL…TITG), 101 to 154 (PVTL…TVSG), and 241 to 293 (TSSQ…TITG).

The protein resides in the cytoplasm. Its function is as follows. Single-stranded nucleic acid binding protein that binds preferentially to oligo dC. In Homo sapiens (Human), this protein is Poly(rC)-binding protein 4 (PCBP4).